A 93-amino-acid chain; its full sequence is DNA-directed RNA polymerase subunit omega (93 aa).

Belongs to the RNA polymerase subunit omega family. In terms of assembly, the RNAP catalytic core consists of 2 alpha, 1 beta, 1 beta' and 1 omega subunit. When a sigma factor is associated with the core the holoenzyme is formed, which can initiate transcription.

It carries out the reaction RNA(n) + a ribonucleoside 5'-triphosphate = RNA(n+1) + diphosphate. Promotes RNA polymerase assembly. Latches the N- and C-terminal regions of the beta' subunit thereby facilitating its interaction with the beta and alpha subunits. In Corynebacterium urealyticum (strain ATCC 43042 / DSM 7109), this protein is DNA-directed RNA polymerase subunit omega.